We begin with the raw amino-acid sequence, 363 residues long: DNA replication and repair protein RecF (363 aa).

30-37 contacts ATP; it reads GINGSGKS.

The protein belongs to the RecF family.

It is found in the cytoplasm. Functionally, the RecF protein is involved in DNA metabolism; it is required for DNA replication and normal SOS inducibility. RecF binds preferentially to single-stranded, linear DNA. It also seems to bind ATP. The protein is DNA replication and repair protein RecF of Pseudoalteromonas atlantica (strain T6c / ATCC BAA-1087).